The following is a 336-amino-acid chain: MIDRYILAIESSCDETSVAILKNEDQLLSNIIASQVESHKRFGGVVPEVASRHHVEVITLCIQDALQEAGITAGDLSAVAVTYGPGLVGALLVGMAAAKAFAWANHLPLIPVNHMAGHLMAAQSIADLQYPLLALLVSGGHTELVYVAAPGDYRIVGETRDDAVGEAYDKVGRVMGLTYPAGKEIDQLAHQGQDIYDFPRAMIKEDNLEFSFSGLKSAFINLHHNARQKGEQLRLEDLCASFQAAVLDILMVKTKKALAAYPVKTLVIAGGVAANQGLRERLKEDIKDINVVIPPLRLCGDNAGMIAYAAAVEYEKGHFAELDLNAKPSLAFEGLE.

Histidine 114 and histidine 118 together coordinate Fe cation. Substrate-binding positions include 136 to 140 (LVSGG), aspartate 169, glycine 182, aspartate 186, and asparagine 275. Aspartate 301 is a binding site for Fe cation.

This sequence belongs to the KAE1 / TsaD family. It depends on Fe(2+) as a cofactor.

Its subcellular location is the cytoplasm. The enzyme catalyses L-threonylcarbamoyladenylate + adenosine(37) in tRNA = N(6)-L-threonylcarbamoyladenosine(37) in tRNA + AMP + H(+). Functionally, required for the formation of a threonylcarbamoyl group on adenosine at position 37 (t(6)A37) in tRNAs that read codons beginning with adenine. Is involved in the transfer of the threonylcarbamoyl moiety of threonylcarbamoyl-AMP (TC-AMP) to the N6 group of A37, together with TsaE and TsaB. TsaD likely plays a direct catalytic role in this reaction. The sequence is that of tRNA N6-adenosine threonylcarbamoyltransferase from Streptococcus mutans serotype c (strain ATCC 700610 / UA159).